Consider the following 277-residue polypeptide: 3-methyl-2-oxobutanoate hydroxymethyltransferase (277 aa).

Residues aspartate 53 and aspartate 96 each contribute to the Mg(2+) site. 3-methyl-2-oxobutanoate-binding positions include 53–54 (DS), aspartate 96, and lysine 126. A Mg(2+)-binding site is contributed by glutamate 128. Catalysis depends on glutamate 195, which acts as the Proton acceptor.

This sequence belongs to the PanB family. As to quaternary structure, homodecamer; pentamer of dimers. The cofactor is Mg(2+).

It is found in the cytoplasm. The catalysed reaction is 3-methyl-2-oxobutanoate + (6R)-5,10-methylene-5,6,7,8-tetrahydrofolate + H2O = 2-dehydropantoate + (6S)-5,6,7,8-tetrahydrofolate. Its pathway is cofactor biosynthesis; (R)-pantothenate biosynthesis; (R)-pantoate from 3-methyl-2-oxobutanoate: step 1/2. Catalyzes the reversible reaction in which hydroxymethyl group from 5,10-methylenetetrahydrofolate is transferred onto alpha-ketoisovalerate to form ketopantoate. The protein is 3-methyl-2-oxobutanoate hydroxymethyltransferase of Chlorobium luteolum (strain DSM 273 / BCRC 81028 / 2530) (Pelodictyon luteolum).